The following is a 47-amino-acid chain: Sperm protamine P1 (47 aa).

The protein belongs to the protamine P1 family. Testis.

The protein localises to the nucleus. It localises to the chromosome. Protamines substitute for histones in the chromatin of sperm during the haploid phase of spermatogenesis. They compact sperm DNA into a highly condensed, stable and inactive complex. The sequence is that of Sperm protamine P1 (PRM1) from Orcinus orca (Killer whale).